Reading from the N-terminus, the 177-residue chain is Eggshell protein (177 aa).

The signal sequence occupies residues 1-18 (MKQSLTLVFLVAIGYATA). A run of 5 repeats spans residues 25-41 (YSGGYGGGCYGSDCDSG), 42-59 (YGDSGYGGGCTGGDCGGG), 60-75 (YGGGYGGGCSGGDCGN), 76-91 (YGGGYGGDCNGGDCGN), and 92-112 (YGGGYGGGNGGGCSGGNCGGG). The segment at 25–112 (YSGGYGGGCY…GCSGGNCGGG (88 aa)) is 5 X approximate tandem repeats. Over residues 149 to 166 (GSGKGKGGGKGGKGGKGG) the composition is skewed to gly residues. Residues 149–177 (GSGKGKGGGKGGKGGKGGTYKPSHYGGGY) form a disordered region.

This chain is Eggshell protein (F10), found in Schistosoma mansoni (Blood fluke).